The chain runs to 145 residues: Deoxyuridine 5'-triphosphate nucleotidohydrolase (145 aa).

Substrate contacts are provided by residues 64-66 (RSG), Asn-77, 81-83 (TID), and Met-91.

The protein belongs to the dUTPase family. Requires Mg(2+) as cofactor.

It catalyses the reaction dUTP + H2O = dUMP + diphosphate + H(+). The protein operates within pyrimidine metabolism; dUMP biosynthesis; dUMP from dCTP (dUTP route): step 2/2. Functionally, this enzyme is involved in nucleotide metabolism: it produces dUMP, the immediate precursor of thymidine nucleotides and it decreases the intracellular concentration of dUTP so that uracil cannot be incorporated into DNA. The sequence is that of Deoxyuridine 5'-triphosphate nucleotidohydrolase from Leptospira interrogans serogroup Icterohaemorrhagiae serovar copenhageni (strain Fiocruz L1-130).